The sequence spans 354 residues: Probable L-ascorbate-6-phosphate lactonase UlaG (354 aa).

Belongs to the UlaG family. Requires a divalent metal cation as cofactor.

The protein localises to the cytoplasm. It carries out the reaction L-ascorbate 6-phosphate + H2O = 3-dehydro-L-gulonate 6-phosphate. Its pathway is cofactor degradation; L-ascorbate degradation; D-xylulose 5-phosphate from L-ascorbate: step 1/4. In terms of biological role, probably catalyzes the hydrolysis of L-ascorbate-6-P into 3-keto-L-gulonate-6-P. Is essential for L-ascorbate utilization under anaerobic conditions. The sequence is that of Probable L-ascorbate-6-phosphate lactonase UlaG from Shigella boydii serotype 18 (strain CDC 3083-94 / BS512).